Consider the following 331-residue polypeptide: Pantothenate kinase (331 aa).

109 to 116 (GSVAVGKS) is an ATP binding site.

It belongs to the prokaryotic pantothenate kinase family.

The protein resides in the cytoplasm. The catalysed reaction is (R)-pantothenate + ATP = (R)-4'-phosphopantothenate + ADP + H(+). Its pathway is cofactor biosynthesis; coenzyme A biosynthesis; CoA from (R)-pantothenate: step 1/5. The protein is Pantothenate kinase of Rhizobium johnstonii (strain DSM 114642 / LMG 32736 / 3841) (Rhizobium leguminosarum bv. viciae).